Consider the following 648-residue polypeptide: Chaperone protein HtpG (648 aa).

The tract at residues 1–349 (MTTEHAAGAQ…SSDLPLNVSR (349 aa)) is a; substrate-binding. Positions 350–570 (EILQESKDID…EHDVGMNLAR (221 aa)) are b. The segment at 571–648 (ILKAAGQQAP…MAMGGSAGTD (78 aa)) is c.

It belongs to the heat shock protein 90 family. As to quaternary structure, homodimer.

Its subcellular location is the cytoplasm. Molecular chaperone. Has ATPase activity. The sequence is that of Chaperone protein HtpG from Aromatoleum aromaticum (strain DSM 19018 / LMG 30748 / EbN1) (Azoarcus sp. (strain EbN1)).